The primary structure comprises 170 residues: Cytochrome b6-f complex subunit 4 (170 aa).

The next 3 helical transmembrane spans lie at 46-66, 105-125, and 141-161; these read LLFMFPVVILGTIGVIVGLSV, LLGIALMSAIPVGLLFVPFIE, and TVFLIGTLVTLYLGIGATLPL.

This sequence belongs to the cytochrome b family. PetD subfamily. The 4 large subunits of the cytochrome b6-f complex are cytochrome b6, subunit IV (17 kDa polypeptide, PetD), cytochrome f and the Rieske protein, while the 4 small subunits are PetG, PetL, PetM and PetN. The complex functions as a dimer.

It is found in the cellular thylakoid membrane. Component of the cytochrome b6-f complex, which mediates electron transfer between photosystem II (PSII) and photosystem I (PSI), cyclic electron flow around PSI, and state transitions. The chain is Cytochrome b6-f complex subunit 4 from Synechococcus sp. (strain JA-2-3B'a(2-13)) (Cyanobacteria bacterium Yellowstone B-Prime).